A 197-amino-acid chain; its full sequence is Peptidyl-tRNA hydrolase (197 aa).

Tyrosine 18 serves as a coordination point for tRNA. Histidine 23 acts as the Proton acceptor in catalysis. Residues phenylalanine 69, asparagine 71, and asparagine 117 each coordinate tRNA.

This sequence belongs to the PTH family. In terms of assembly, monomer.

Its subcellular location is the cytoplasm. The catalysed reaction is an N-acyl-L-alpha-aminoacyl-tRNA + H2O = an N-acyl-L-amino acid + a tRNA + H(+). In terms of biological role, hydrolyzes ribosome-free peptidyl-tRNAs (with 1 or more amino acids incorporated), which drop off the ribosome during protein synthesis, or as a result of ribosome stalling. Catalyzes the release of premature peptidyl moieties from peptidyl-tRNA molecules trapped in stalled 50S ribosomal subunits, and thus maintains levels of free tRNAs and 50S ribosomes. In Psychromonas ingrahamii (strain DSM 17664 / CCUG 51855 / 37), this protein is Peptidyl-tRNA hydrolase.